The sequence spans 344 residues: DNA-directed RNA polymerase subunit alpha (344 aa).

The tract at residues 1–246 (MPVEKFLKDF…EFLFPLIDFE (246 aa)) is alpha N-terminal domain (alpha-NTD). Residues 259 to 344 (ESSNLLDMSI…VLSKNVKISE (86 aa)) are alpha C-terminal domain (alpha-CTD).

It belongs to the RNA polymerase alpha chain family. In terms of assembly, homodimer. The RNAP catalytic core consists of 2 alpha, 1 beta, 1 beta' and 1 omega subunit. When a sigma factor is associated with the core the holoenzyme is formed, which can initiate transcription.

It carries out the reaction RNA(n) + a ribonucleoside 5'-triphosphate = RNA(n+1) + diphosphate. Functionally, DNA-dependent RNA polymerase catalyzes the transcription of DNA into RNA using the four ribonucleoside triphosphates as substrates. In Borrelia garinii subsp. bavariensis (strain ATCC BAA-2496 / DSM 23469 / PBi) (Borreliella bavariensis), this protein is DNA-directed RNA polymerase subunit alpha.